A 190-amino-acid chain; its full sequence is Xanthine phosphoribosyltransferase (190 aa).

Xanthine contacts are provided by leucine 20 and asparagine 27. Residue 128 to 132 (ANGKA) coordinates 5-phospho-alpha-D-ribose 1-diphosphate. Lysine 156 is a xanthine binding site.

This sequence belongs to the purine/pyrimidine phosphoribosyltransferase family. Xpt subfamily. As to quaternary structure, homodimer.

Its subcellular location is the cytoplasm. The catalysed reaction is XMP + diphosphate = xanthine + 5-phospho-alpha-D-ribose 1-diphosphate. It participates in purine metabolism; XMP biosynthesis via salvage pathway; XMP from xanthine: step 1/1. Functionally, converts the preformed base xanthine, a product of nucleic acid breakdown, to xanthosine 5'-monophosphate (XMP), so it can be reused for RNA or DNA synthesis. The sequence is that of Xanthine phosphoribosyltransferase from Pseudomonas putida (strain ATCC 700007 / DSM 6899 / JCM 31910 / BCRC 17059 / LMG 24140 / F1).